The primary structure comprises 85 residues: Protein WIR1B (85 aa).

Topologically, residues Met-1 to Thr-12 are cytoplasmic. Residues Ala-13 to Leu-34 traverse the membrane as a helical segment. The Extracellular portion of the chain corresponds to Gly-35–Pro-85.

It is found in the membrane. Associated with pathogen defense. The protein is Protein WIR1B (WIR1B) of Triticum aestivum (Wheat).